Reading from the N-terminus, the 280-residue chain is Ycf3-interacting protein 1, chloroplastic (280 aa).

Residues 1 to 62 (MTTQIFQLPL…NNRRFGSLIV (62 aa)) constitute a chloroplast transit peptide. The interval 75 to 103 (PVPLTLEQQEKEKQNRDDEEDEIDEGDVD) is disordered. A compositionally biased stretch (acidic residues) spans 91–103 (DDEEDEIDEGDVD). The chain crosses the membrane as a helical span at residues 255–275 (ALYFVSALPVIIGISVVLILF).

Belongs to the Y3IP1/CEST family. In terms of assembly, interacts with Ycf3. Expressed in cotyledons, rosette and cauline leaves, stems and sepals.

It localises to the plastid. The protein resides in the chloroplast thylakoid membrane. Nuclear genome-encoded factor that participates in photosystem I (PSI) biogenesis. Cooperates with the plastid genome-encoded protein PSI assembly Ycf3 in the assembly of stable PSI units in the thylakoid membrane. Involved in light-induced chloroplast development and growth. Involved in the plant response to abiotic and photooxidative stresses. May be involved in the suppression of photooxidative damage. This Arabidopsis thaliana (Mouse-ear cress) protein is Ycf3-interacting protein 1, chloroplastic.